A 125-amino-acid chain; its full sequence is Small ribosomal subunit protein uS13 (125 aa).

This sequence belongs to the universal ribosomal protein uS13 family. As to quaternary structure, part of the 30S ribosomal subunit. Forms a loose heterodimer with protein S19. Forms two bridges to the 50S subunit in the 70S ribosome.

Its function is as follows. Located at the top of the head of the 30S subunit, it contacts several helices of the 16S rRNA. In the 70S ribosome it contacts the 23S rRNA (bridge B1a) and protein L5 of the 50S subunit (bridge B1b), connecting the 2 subunits; these bridges are implicated in subunit movement. Contacts the tRNAs in the A and P-sites. This Rickettsia akari (strain Hartford) protein is Small ribosomal subunit protein uS13.